A 797-amino-acid polypeptide reads, in one-letter code: Protocadherin beta-9 (797 aa).

A signal peptide spans 1–26; it reads MKTRGFSFPRQRQVLFLFLFWGVSLA. Residues 27 to 690 are Extracellular-facing; the sequence is GSGFGRYSVT…AQADSLTVYL (664 aa). Cadherin domains follow at residues 35 to 133, 138 to 242, 247 to 347, 352 to 451, and 456 to 561; these read VTEE…SPVF, MVLK…APQF, YETQ…PPEL, LSNS…APAF, and YTLF…SPFV. The N-linked (GlcNAc...) asparagine glycan is linked to Asn169. Asn418 carries N-linked (GlcNAc...) asparagine glycosylation. Asn567 carries N-linked (GlcNAc...) asparagine glycosylation. Positions 568-671 constitute a Cadherin 6 domain; that stretch reads GSAPCTELVP…LVDGFSQPYL (104 aa). Residues 691 to 711 traverse the membrane as a helical segment; it reads VVALASVSSLFLLSVLLFVAV. Topologically, residues 712 to 797 are cytoplasmic; sequence RLCRRSRAAS…TLHNSFGFNY (86 aa).

The protein localises to the cell membrane. Potential calcium-dependent cell-adhesion protein. May be involved in the establishment and maintenance of specific neuronal connections in the brain. The polypeptide is Protocadherin beta-9 (PCDHB9) (Pan troglodytes (Chimpanzee)).